We begin with the raw amino-acid sequence, 955 residues long: Outer capsid protein VP2 (955 aa).

The protein belongs to the orbivirus VP2 family.

The protein localises to the virion. Functionally, the VP2 protein is one of the two proteins (with VP5) which constitute the virus particle outer capsid. It is the major target of the host immunogenic response. Responsible for viral attachment to target host cell, probably by binding to sialic acid. This attachment induces virion internalization predominantly through clathrin-dependent endocytosis. The protein is Outer capsid protein VP2 (Segment-2) of Antilocapra americana (Pronghorn).